We begin with the raw amino-acid sequence, 826 residues long: Leucine--tRNA ligase (826 aa).

Residues 41–51 (PYPSGKLHMGH) carry the 'HIGH' region motif. The short motif at 586–590 (KMSKS) is the 'KMSKS' region element. Lys-589 contacts ATP.

It belongs to the class-I aminoacyl-tRNA synthetase family.

It localises to the cytoplasm. It catalyses the reaction tRNA(Leu) + L-leucine + ATP = L-leucyl-tRNA(Leu) + AMP + diphosphate. In Natranaerobius thermophilus (strain ATCC BAA-1301 / DSM 18059 / JW/NM-WN-LF), this protein is Leucine--tRNA ligase.